The primary structure comprises 605 residues: Adaptin medium chain homolog APM2 (605 aa).

Residues 150-196 are disordered; sequence EEWSPGEESSSSSGSDSDSEYSNTNKRKDKKKKRKKKKGTKGKSVGK. The span at 155–171 shows a compositional bias: low complexity; it reads GEESSSSSGSDSDSEYS. Residues 174–196 are compositionally biased toward basic residues; that stretch reads NKRKDKKKKRKKKKGTKGKSVGK. Positions 269-604 constitute an MHD domain; that stretch reads KNEFFLDVIE…TVSDEEYAYI (336 aa).

The protein belongs to the adaptor complexes medium subunit family. As to quaternary structure, component of the AP-1R complex composed of at least APM2, APL4 and APS1. Interacts with MIL1. Interacts with APL2.

The protein resides in the golgi apparatus membrane. Its subcellular location is the early endosome membrane. It is found in the cytoplasmic vesicle. The protein localises to the clathrin-coated vesicle membrane. In terms of biological role, component of the AP-1-related (AP-1R) complex, an adapter protein complex that mediates of cargo protein sorting in clathrin-coated vesicles. AP-1R has a specific role in SNARE SNC1 sorting. In contrast to the APM1-containing AP-1 complex, AP-1R is incapable of sorting CHS3. The polypeptide is Adaptin medium chain homolog APM2 (APM2) (Saccharomyces cerevisiae (strain ATCC 204508 / S288c) (Baker's yeast)).